The sequence spans 207 residues: Outer-membrane lipoprotein carrier protein (207 aa).

An N-terminal signal peptide occupies residues 1-21; sequence MRAIRMLLVSALALGTVTAYA.

The protein belongs to the LolA family. In terms of assembly, monomer.

The protein localises to the periplasm. Functionally, participates in the translocation of lipoproteins from the inner membrane to the outer membrane. Only forms a complex with a lipoprotein if the residue after the N-terminal Cys is not an aspartate (The Asp acts as a targeting signal to indicate that the lipoprotein should stay in the inner membrane). The sequence is that of Outer-membrane lipoprotein carrier protein from Pseudomonas putida (strain GB-1).